Reading from the N-terminus, the 547-residue chain is MFS-type transporter ltbE (547 aa).

A disordered region spans residues Met-1–Ser-23. A run of 13 helical transmembrane segments spans residues Gln-33–Ile-53, Asp-74–Gly-94, Trp-104–Pro-124, Ile-135–Val-155, Pro-165–Ile-185, Phe-195–Leu-215, Ala-240–Val-260, Lys-267–Trp-287, Gly-310–Phe-330, Ile-343–Ala-363, Val-370–Val-390, Trp-399–Leu-419, and Thr-432–Gly-452. Asn-463 is a glycosylation site (N-linked (GlcNAc...) asparagine). The helical transmembrane segment at Val-506–Trp-526 threads the bilayer.

It belongs to the major facilitator superfamily. TCR/Tet family.

The protein localises to the cell membrane. MFS-type transporter; part of the gene cluster that mediates the biosynthesis of luteodienoside A, a glycosylated polyketide consisting of an unusual 1-O-beta-D-glucopyranosyl-myo-inositol (glucinol) ester of 3-hydroxy-2,2,4-trimethylocta-4,6-dienoic acid. LtbE is probably involved in the secretion of luteodienoside A. This chain is MFS-type transporter ltbE, found in Aspergillus luteorubrus.